A 257-amino-acid polypeptide reads, in one-letter code: Deoxyribose-phosphate aldolase (257 aa).

Asp-102 serves as the catalytic Proton donor/acceptor. The active-site Schiff-base intermediate with acetaldehyde is Lys-166. The active-site Proton donor/acceptor is the Lys-198.

This sequence belongs to the DeoC/FbaB aldolase family. DeoC type 2 subfamily.

The protein localises to the cytoplasm. The catalysed reaction is 2-deoxy-D-ribose 5-phosphate = D-glyceraldehyde 3-phosphate + acetaldehyde. It functions in the pathway carbohydrate degradation; 2-deoxy-D-ribose 1-phosphate degradation; D-glyceraldehyde 3-phosphate and acetaldehyde from 2-deoxy-alpha-D-ribose 1-phosphate: step 2/2. Functionally, catalyzes a reversible aldol reaction between acetaldehyde and D-glyceraldehyde 3-phosphate to generate 2-deoxy-D-ribose 5-phosphate. The sequence is that of Deoxyribose-phosphate aldolase from Shewanella halifaxensis (strain HAW-EB4).